Here is a 610-residue protein sequence, read N- to C-terminus: Protein mono-ADP-ribosyltransferase PARP6 (610 aa).

Positions 374–600 (EMTQGSYLEI…QDPKIQKEIM (227 aa)) constitute a PARP catalytic domain. D580 is modified (ADP-ribosyl aspartic acid).

It belongs to the ARTD/PARP family. In terms of processing, auto-mono-ADP-ribosylated.

It carries out the reaction L-aspartyl-[protein] + NAD(+) = 4-O-(ADP-D-ribosyl)-L-aspartyl-[protein] + nicotinamide. The catalysed reaction is L-cysteinyl-[protein] + NAD(+) = S-(ADP-D-ribosyl)-L-cysteinyl-[protein] + nicotinamide + H(+). In terms of biological role, mono-ADP-ribosyltransferase that mediates mono-ADP-ribosylation of target proteins. The chain is Protein mono-ADP-ribosyltransferase PARP6 from Pongo abelii (Sumatran orangutan).